The primary structure comprises 235 residues: Leucyl/phenylalanyl-tRNA--protein transferase (235 aa).

It belongs to the L/F-transferase family.

It localises to the cytoplasm. The catalysed reaction is N-terminal L-lysyl-[protein] + L-leucyl-tRNA(Leu) = N-terminal L-leucyl-L-lysyl-[protein] + tRNA(Leu) + H(+). It carries out the reaction N-terminal L-arginyl-[protein] + L-leucyl-tRNA(Leu) = N-terminal L-leucyl-L-arginyl-[protein] + tRNA(Leu) + H(+). The enzyme catalyses L-phenylalanyl-tRNA(Phe) + an N-terminal L-alpha-aminoacyl-[protein] = an N-terminal L-phenylalanyl-L-alpha-aminoacyl-[protein] + tRNA(Phe). Its function is as follows. Functions in the N-end rule pathway of protein degradation where it conjugates Leu, Phe and, less efficiently, Met from aminoacyl-tRNAs to the N-termini of proteins containing an N-terminal arginine or lysine. This chain is Leucyl/phenylalanyl-tRNA--protein transferase, found in Shewanella frigidimarina (strain NCIMB 400).